Reading from the N-terminus, the 597-residue chain is Arginine--tRNA ligase (597 aa).

A 'HIGH' region motif is present at residues 138 to 148 (ANPTGPMHVGH).

It belongs to the class-I aminoacyl-tRNA synthetase family. Monomer.

It is found in the cytoplasm. It catalyses the reaction tRNA(Arg) + L-arginine + ATP = L-arginyl-tRNA(Arg) + AMP + diphosphate. This Rhodopseudomonas palustris (strain ATCC BAA-98 / CGA009) protein is Arginine--tRNA ligase.